A 282-amino-acid polypeptide reads, in one-letter code: Phosphatidylglycerol--prolipoprotein diacylglyceryl transferase (282 aa).

3 consecutive transmembrane segments (helical) span residues 18-38 (LSIKWYGIIIAVGILIGYFIA), 55-75 (VIFYSAIFGFIAARIYFVIFQ), and 89-109 (IWHGGIAIHGGLLGGFITGII). An a 1,2-diacyl-sn-glycero-3-phospho-(1'-sn-glycerol)-binding site is contributed by R137. 2 helical membrane-spanning segments follow: residues 203-223 (VGETFTLYLIWYSIGRFFVEG) and 235-255 (IRVAQLVSVILIIIGLVILIY).

This sequence belongs to the Lgt family.

It is found in the cell membrane. The enzyme catalyses L-cysteinyl-[prolipoprotein] + a 1,2-diacyl-sn-glycero-3-phospho-(1'-sn-glycerol) = an S-1,2-diacyl-sn-glyceryl-L-cysteinyl-[prolipoprotein] + sn-glycerol 1-phosphate + H(+). Its pathway is protein modification; lipoprotein biosynthesis (diacylglyceryl transfer). Catalyzes the transfer of the diacylglyceryl group from phosphatidylglycerol to the sulfhydryl group of the N-terminal cysteine of a prolipoprotein, the first step in the formation of mature lipoproteins. In Staphylococcus haemolyticus (strain JCSC1435), this protein is Phosphatidylglycerol--prolipoprotein diacylglyceryl transferase.